A 415-amino-acid chain; its full sequence is Alpha-N-acetylgalactosaminidase (415 aa).

Residues 1 to 17 (MLQKTVLLLALVAQVLM) form the signal peptide. Cystine bridges form between Cys-38/Cys-80, Cys-42/Cys-49, and Cys-127/Cys-158. Substrate contacts are provided by residues 78–79 (DD) and Lys-154. Residue Asp-156 is the Nucleophile of the active site. A glycan (N-linked (GlcNAc...) asparagine) is linked at Asn-177. Cys-187 and Cys-209 are joined by a disulfide. Residue Ser-188 participates in substrate binding. Asn-201 carries N-linked (GlcNAc...) asparagine glycosylation. Substrate is bound by residues Arg-213 and Asp-217. The active-site Proton donor is the Asp-217. The residue at position 322 (Ser-322) is a Phosphoserine. Asn-330 carries N-linked (GlcNAc...) asparagine glycosylation. Position 332 is a phosphoserine (Ser-332). A glycan (N-linked (GlcNAc...) asparagine) is linked at Asn-385.

Belongs to the glycosyl hydrolase 27 family. As to quaternary structure, homodimer.

The protein localises to the lysosome. It catalyses the reaction Cleavage of non-reducing alpha-(1-&gt;3)-N-acetylgalactosamine residues from human blood group A and AB mucin glycoproteins, Forssman hapten and blood group A lacto series glycolipids.. The enzyme catalyses a neolactoside IV(3)-alpha-GalNAc,IV(2)-alpha-Fuc-nLc4Cer(d18:1(4E)) + H2O = a neolactoside IV(2)-alpha-Fuc-nLc4Cer(d18:1(4E)) + N-acetyl-alpha-D-galactosamine. The catalysed reaction is a neolactoside IV(3)-alpha-GalNAc,IV(2)-alpha-Fuc-nLc4Cer(d18:0) + H2O = a neolactoside IV(2)-alpha-Fuc-nLc4Cer(d18:0) + N-acetyl-alpha-D-galactosamine. It carries out the reaction a globoside IV3GalNAc-Gb4Cer + H2O = N-acetyl-alpha-D-galactosamine + a globoside Gb4Cer. Its function is as follows. Removes terminal alpha-N-acetylgalactosamine residues from glycolipids and glycopeptides. Required for the breakdown of glycolipids. The protein is Alpha-N-acetylgalactosaminidase (Naga) of Rattus norvegicus (Rat).